We begin with the raw amino-acid sequence, 175 residues long: Ribosome maturation factor RimM (175 aa).

The PRC barrel domain maps to 99 to 172; the sequence is EGEFHLLDLV…WLRLTPPPGL (74 aa).

This sequence belongs to the RimM family. Binds ribosomal protein uS19.

The protein resides in the cytoplasm. In terms of biological role, an accessory protein needed during the final step in the assembly of 30S ribosomal subunit, possibly for assembly of the head region. Essential for efficient processing of 16S rRNA. May be needed both before and after RbfA during the maturation of 16S rRNA. It has affinity for free ribosomal 30S subunits but not for 70S ribosomes. This chain is Ribosome maturation factor RimM, found in Synechococcus sp. (strain WH7803).